The following is a 393-amino-acid chain: Lysine/ornithine decarboxylase (393 aa).

Lysine 51 is subject to N6-(pyridoxal phosphate)lysine. Cysteine 323 serves as the catalytic Proton donor; shared with dimeric partner.

This sequence belongs to the Orn/Lys/Arg decarboxylase class-II family. In terms of assembly, homodimer. Pyridoxal 5'-phosphate serves as cofactor.

It catalyses the reaction L-lysine + H(+) = cadaverine + CO2. The enzyme catalyses L-ornithine + H(+) = putrescine + CO2. The protein operates within amine and polyamine biosynthesis; putrescine biosynthesis via L-ornithine pathway; putrescine from L-ornithine: step 1/1. Inhibited competitively by both alpha-difluoromethyllysine and alpha-difluoromethylornithine. In terms of biological role, decarboxylates both L-lysine and L-ornithine with similar catalytic efficiency. This is Lysine/ornithine decarboxylase (ldc) from Selenomonas ruminantium.